The primary structure comprises 246 residues: tRNA pseudouridine synthase A (246 aa).

The Nucleophile role is filled by aspartate 52. Residue tyrosine 112 coordinates substrate.

This sequence belongs to the tRNA pseudouridine synthase TruA family. In terms of assembly, homodimer.

It carries out the reaction uridine(38/39/40) in tRNA = pseudouridine(38/39/40) in tRNA. Functionally, formation of pseudouridine at positions 38, 39 and 40 in the anticodon stem and loop of transfer RNAs. The protein is tRNA pseudouridine synthase A of Pelagibacter ubique (strain HTCC1062).